The chain runs to 226 residues: Isoprenyl transferase (226 aa).

Residue Asp-12 is part of the active site. A Mg(2+)-binding site is contributed by Asp-12. Residues 13–16 (GNAR), Trp-17, Lys-25, His-29, and 57–59 (SSE) each bind substrate. Asn-60 acts as the Proton acceptor in catalysis. Substrate-binding positions include Trp-61, Arg-63, Arg-174, and 180 to 182 (RIS). Glu-193 lines the Mg(2+) pocket.

Belongs to the UPP synthase family. As to quaternary structure, homodimer. Mg(2+) serves as cofactor.

Catalyzes the condensation of isopentenyl diphosphate (IPP) with allylic pyrophosphates generating different type of terpenoids. The chain is Isoprenyl transferase from Rickettsia bellii (strain RML369-C).